We begin with the raw amino-acid sequence, 297 residues long: Tumor necrosis factor receptor superfamily member 27 (297 aa).

Topologically, residues 1-138 (MDCQENEYWD…TPTVPPQEAT (138 aa)) are extracellular. 3 TNFR-Cys repeats span residues 2-41 (DCQE…DAYC), 43-83 (ACPP…NAVC), and 85-118 (DCLP…EVQC). 8 disulfide bridges follow: Cys-3-Cys-15, Cys-18-Cys-31, Cys-21-Cys-41, Cys-44-Cys-58, Cys-61-Cys-75, Cys-64-Cys-83, Cys-86-Cys-104, and Cys-107-Cys-118. N-linked (GlcNAc...) asparagine glycosylation is present at Asn-74. Residues 139-159 (LVALVSSLLVVFTLAFLGLFF) traverse the membrane as a helical; Signal-anchor for type III membrane protein segment. Residues 160–297 (LYCKQFFNRH…LNVPFEVPSP (138 aa)) are Cytoplasmic-facing. A compositionally biased stretch (polar residues) spans 272–281 (ETLGGNTVES). The tract at residues 272-297 (ETLGGNTVESTGDRLELNVPFEVPSP) is disordered.

As to quaternary structure, associates with TRAF1, TRAF3 and TRAF6.

It localises to the membrane. Receptor for EDA isoform A2, but not for EDA isoform A1. Mediates the activation of the NF-kappa-B and JNK pathways. Activation seems to be mediated by binding to TRAF3 and TRAF6. The protein is Tumor necrosis factor receptor superfamily member 27 (EDA2R) of Homo sapiens (Human).